The sequence spans 306 residues: Aspartate carbamoyltransferase catalytic subunit (306 aa).

Positions 55 and 56 each coordinate carbamoyl phosphate. Lys84 provides a ligand contact to L-aspartate. The carbamoyl phosphate site is built by Arg105, His133, and Gln136. L-aspartate is bound by residues Arg166 and Arg227. Residues Leu265 and Pro266 each contribute to the carbamoyl phosphate site.

Belongs to the aspartate/ornithine carbamoyltransferase superfamily. ATCase family. As to quaternary structure, heterododecamer (2C3:3R2) of six catalytic PyrB chains organized as two trimers (C3), and six regulatory PyrI chains organized as three dimers (R2).

It catalyses the reaction carbamoyl phosphate + L-aspartate = N-carbamoyl-L-aspartate + phosphate + H(+). The protein operates within pyrimidine metabolism; UMP biosynthesis via de novo pathway; (S)-dihydroorotate from bicarbonate: step 2/3. Catalyzes the condensation of carbamoyl phosphate and aspartate to form carbamoyl aspartate and inorganic phosphate, the committed step in the de novo pyrimidine nucleotide biosynthesis pathway. This is Aspartate carbamoyltransferase catalytic subunit from Neisseria meningitidis serogroup C / serotype 2a (strain ATCC 700532 / DSM 15464 / FAM18).